The chain runs to 328 residues: dITP/XTP pyrophosphatase (328 aa).

The segment at 1–129 is unknown; it reads MSEKIYEYKD…ATSEQGFGDT (129 aa). The segment at 130–324 is NTP pyrophosphatase; that stretch reads ILIATRNEGK…KLMEVFPAWQ (195 aa). Substrate is bound at residue 134-139; sequence TRNEGK. Asp-196 (proton acceptor) is an active-site residue. Asp-196 lines the Mg(2+) pocket. Substrate contacts are provided by residues Ser-197, 280–283, Lys-303, and 308–309; these read FGYD and HR.

Belongs to the HAM1 NTPase family. Homodimer. Requires Mg(2+) as cofactor.

It catalyses the reaction XTP + H2O = XMP + diphosphate + H(+). It carries out the reaction dITP + H2O = dIMP + diphosphate + H(+). The catalysed reaction is ITP + H2O = IMP + diphosphate + H(+). Pyrophosphatase that catalyzes the hydrolysis of nucleoside triphosphates to their monophosphate derivatives, with a high preference for the non-canonical purine nucleotides XTP (xanthosine triphosphate), dITP (deoxyinosine triphosphate) and ITP. Seems to function as a house-cleaning enzyme that removes non-canonical purine nucleotides from the nucleotide pool, thus preventing their incorporation into DNA/RNA and avoiding chromosomal lesions. In Streptococcus pyogenes serotype M18 (strain MGAS8232), this protein is dITP/XTP pyrophosphatase.